Reading from the N-terminus, the 265-residue chain is Translation initiation factor 2 subunit alpha (265 aa).

The S1 motif domain occupies 12-83 (GELIIGTVYK…KKGHVDASLK (72 aa)).

It belongs to the eIF-2-alpha family. As to quaternary structure, heterotrimer composed of an alpha, a beta and a gamma chain.

EIF-2 functions in the early steps of protein synthesis by forming a ternary complex with GTP and initiator tRNA. This chain is Translation initiation factor 2 subunit alpha, found in Methanobrevibacter smithii (strain ATCC 35061 / DSM 861 / OCM 144 / PS).